The following is a 486-amino-acid chain: MPAPTTEIEPIEAQSLKKLSLKSLKRSLELFSPVHGQFPPPDPEAKQIRLSHKMKVAFGGVEPVVSQPPRQPDRINEQPGPSNALSLAAPEGSKSTQKGATESAIVVGPTLLRPILPKGLNYTGSSGKSTTIIPANVSSYQRNLSTAALMERIPSRWPRPEWHAPWKNYRVIQGHLGWVRSVAFDPSNEWFCTGSADRTIKIWDVATGVLKLTLTGHIEQVRGLAVSNRHTYMFSAGDDKQVKCWDLEQNKVIRSYHGHLSGVYCLALHPTLDVLLTGGRDSVCRVWDIRTKMQIFALSGHDNTVCSVFTRPTDPQVVTGSHDTTIKFWDLRYGKTMSTLTHHKKSVRAMTLHPKENAFASASADNTKKFSLPKGEFCHNMLSQQKTIINAMAVNEDGVMVTGGDNGSIWFWDWKSGHSFQQSETIVQPGSLESEAGIYAACYDNTGSRLVTCEADKTIKMWKEDENATPETHPINFKPPKEIRRF.

The tract at residues 62–101 is disordered; the sequence is EPVVSQPPRQPDRINEQPGPSNALSLAAPEGSKSTQKGAT. WD repeat units follow at residues 174–204, 216–246, 258–288, 300–330, 342–371, 384–413, and 433–463; these read GHLGWVRSVAFDPSNEWFCTGSADRTIKIWD, GHIEQVRGLAVSNRHTYMFSAGDDKQVKCWD, GHLSGVYCLALHPTLDVLLTGGRDSVCRVWD, GHDNTVCSVFTRPTDPQVVTGSHDTTIKFWD, HHKKSVRAMTLHPKENAFASASADNTKKFS, QQKTIINAMAVNEDGVMVTGGDNGSIWFWD, and ESEAGIYAACYDNTGSRLVTCEADKTIKMWK. Short sequence motifs (DWD box) lie at residues 275–290 and 317–332; these read LLTGGRDSVCRVWDIR and VVTGSHDTTIKFWDLR. Positions 465–486 are disordered; the sequence is DENATPETHPINFKPPKEIRRF.

Belongs to the WD repeat PRL1/PRL2 family. In terms of assembly, component of the multiprotein assembly MOS4-associated complex (MAC) at least composed of MOS4, CDC5, PRL1 and PRP19. Interacts with CDC5. Component of the CUL4-RBX1-DDB1-PRL1 E3 ubiquitin-protein ligase complex. Interacts with DDB1A through its DWD motif. Interacts with AKIN10, AKIN11 and PIPC. Interacts with KAP2.

It localises to the nucleus. The protein operates within protein modification; protein ubiquitination. Its function is as follows. Pleiotropic regulator of glucose, stress and hormone responses. Also regulates cytochrome P450 CYP90A1/CPD. Coordinates the expression of hormone- and stress-related genes and genes related to cell wall modification and growth, leading to altered sugar-dependent growth and developmental responses. Component of the MAC complex that probably regulates defense responses through transcriptional control and thereby is essential for plant innate immunity. By suppressing the expression of several (1)O(2)-responsive genes, PRL1 seems to play a major role in modulating responses of plants to environmental changes by interconnecting (1)O(2)-mediated retrograde signaling with other signaling pathways. Acts as a negative regulator of SNF1-related protein kinases AKIN10 and AKIN11 via the inhibition of their interaction with SKP1/ASK1. Component of the CUL4-RBX1-DDB1-PRL1 E3 ubiquitin-protein ligase complex, PRL1 may function as the substrate recognition module within this complex, leading to the AKIN10 degradation. This chain is Protein pleiotropic regulatory locus 1 (PRL1), found in Arabidopsis thaliana (Mouse-ear cress).